Consider the following 470-residue polypeptide: Uronate isomerase (470 aa).

The protein belongs to the metallo-dependent hydrolases superfamily. Uronate isomerase family.

It catalyses the reaction D-glucuronate = D-fructuronate. The enzyme catalyses aldehydo-D-galacturonate = keto-D-tagaturonate. The protein operates within carbohydrate metabolism; pentose and glucuronate interconversion. The sequence is that of Uronate isomerase from Escherichia coli O17:K52:H18 (strain UMN026 / ExPEC).